Here is a 1750-residue protein sequence, read N- to C-terminus: Protein TIC 214 (1750 aa).

6 helical membrane passes run 12–32, 69–89, 97–117, 129–149, 177–197, and 216–236; these read KIIN…ALSI, FIMG…YVAL, ILAL…SFFA, LEIY…SCIL, FAWF…LVWI, and IFVI…SIQC. The span at 260 to 277 shows a compositional bias: basic and acidic residues; the sequence is RERLQKEEERGVEKKEQS. Disordered regions lie at residues 260 to 282, 617 to 638, 718 to 738, 1205 to 1225, and 1419 to 1512; these read RERL…EEDP, ATTT…KKES, STDK…KQRE, RNSR…PKPV, and ETDS…NKKE. Over residues 617–629 the composition is skewed to low complexity; the sequence is ATTTNSKTNTTKD. Residues 727 to 738 show a composition bias toward basic and acidic residues; the sequence is KKEEKRENKQRE. The segment covering 1420-1512 has biased composition (basic and acidic residues); sequence TDSKQKSETD…TKSDKKNKKE (93 aa).

This sequence belongs to the TIC214 family. Part of the Tic complex.

The protein localises to the plastid. The protein resides in the chloroplast inner membrane. In terms of biological role, involved in protein precursor import into chloroplasts. May be part of an intermediate translocation complex acting as a protein-conducting channel at the inner envelope. The chain is Protein TIC 214 from Cuscuta reflexa (Southern Asian dodder).